Reading from the N-terminus, the 126-residue chain is MNRASTRKIRAVAKHVRMSSNKARRVAHQLRGCTYMEALSILNWMPHRACYPILKVLRSAAANAYHNMGIDKGFLFVLMAEVNEGPIFKRFRPRARGRGYPIQKPTCHISITLEDVTDSNSIMVKK.

Belongs to the universal ribosomal protein uL22 family. In terms of assembly, part of the 50S ribosomal subunit.

The protein resides in the plastid. The protein localises to the chloroplast. In terms of biological role, this protein binds specifically to 23S rRNA. The globular domain of the protein is located near the polypeptide exit tunnel on the outside of the subunit, while an extended beta-hairpin is found that lines the wall of the exit tunnel in the center of the 70S ribosome. In Cryptomeria japonica (Japanese cedar), this protein is Large ribosomal subunit protein uL22c (rpl22).